The primary structure comprises 90 residues: Small ribosomal subunit protein uS15c (90 aa).

It belongs to the universal ribosomal protein uS15 family. In terms of assembly, part of the 30S ribosomal subunit.

It is found in the plastid. The protein resides in the chloroplast. The polypeptide is Small ribosomal subunit protein uS15c (rps15-A) (Brachypodium distachyon (Purple false brome)).